Consider the following 2358-residue polypeptide: Cell wall alpha-1,3-glucan synthase mok13 (2358 aa).

Positions 1645–1659 are enriched in basic and acidic residues; that stretch reads EGLENEENELKDKAP. The interval 1645-1669 is disordered; that stretch reads EGLENEENELKDKAPPNEPNVGSLF.

It belongs to the glycosyltransferase group 1 family.

The enzyme catalyses [(1-&gt;3)-alpha-D-glucosyl](n) + UDP-alpha-D-glucose = [(1-&gt;3)-alpha-D-glucosyl](n+1) + UDP + H(+). The protein is Cell wall alpha-1,3-glucan synthase mok13 (mok13) of Schizosaccharomyces pombe (strain 972 / ATCC 24843) (Fission yeast).